The primary structure comprises 416 residues: Phakinin (416 aa).

The interval Met1 to Val48 is disordered. Ser2 bears the N-acetylserine mark. A head region spans residues Ser2–Cys115. 4 positions are modified to phosphoserine: Ser27, Ser33, Ser36, and Ser91. Polar residues predominate over residues Leu28–Val48. An IF rod domain is found at Asn105 to Asn416. Coiled coils occupy residues Phe199–Arg240 and Leu314–His391. A tail region spans residues Gly397–Asn416.

It belongs to the intermediate filament family. In terms of assembly, part of a complex required for lens intermediate filament formation composed of BFSP1, BFSP2, and CRYAA. Found in a complex composed of PPL (via C-terminal linker domain), BFSP1 and BFSP2 in the retinal lens. Within the complex interacts with PPL (via C-terminal linker domain) and with BFSP1. Identified in a complex that contains VIM, EZR, AHNAK, BFSP1, BFSP2, ANK2, PLEC, PRX and spectrin. Interacts with LGSN. Interacts with VIM. As to expression, expressed in the deep and shallow cortices of the retina lens (at protein level).

The protein resides in the cell membrane. Its subcellular location is the cytoplasm. It localises to the cytoskeleton. The protein localises to the cell cortex. In terms of biological role, required for the correct formation of lens intermediate filaments as part of a complex composed of BFSP1, BFSP2 and CRYAA. Plays a role in maintenance of retinal lens optical clarity. The chain is Phakinin from Rattus norvegicus (Rat).